The sequence spans 900 residues: Chromodomain-helicase-DNA-binding protein 1-like (900 aa).

The Helicase ATP-binding domain occupies 52-217 (VQCFHCQNGC…YSLLCVVEPD (166 aa)). 65–72 (DEMGLGKT) contributes to the ATP binding site. Residues 168 to 171 (DEAH) carry the DEAH box motif. One can recognise a Helicase C-terminal domain in the interval 345–507 (LLDRLLAFLY…QKPSAEADFQ (163 aa)). Ser534 carries the post-translational modification Phosphoserine. The disordered stretch occupies residues 546 to 569 (PDALPAAAAAGGGSLEPEEGSELE). The interval 606–640 (TLLEKTSHGGRTLRNKGSVLIPGLAEGPIKRKKIL) is regulatory linker segment (RLS). Phosphoserine is present on residues Ser612, Ser623, and Ser641. Positions 620–678 (NKGSVLIPGLAEGPIKRKKILSPEELEDRRKKRQEAAAKRKRLMEEKRKEKEEAEHRKK) are required for ATPase activity. The segment at 641-673 (SPEELEDRRKKRQEAAAKRKRLMEEKRKEKEEA) is disordered. Positions 643 to 680 (EELEDRRKKRQEAAAKRKRLMEEKRKEKEEAEHRKKMA) form a coiled coil. A compositionally biased stretch (basic and acidic residues) spans 653-673 (QEAAAKRKRLMEEKRKEKEEA). Positions 709–900 (SAELAYEDLD…ASSSSAPLVP (192 aa)) constitute a Macro domain. Position 894 is a phosphoserine (Ser894).

It belongs to the SNF2/RAD54 helicase family. Interacts with nucleosomes; interacts with the acidic patch of histones. Interacts (via macro domain) with PARP1; interacts only when PARP1 is poly-ADP-ribosylated (PARylated). Interacts with CIAO1.

It is found in the nucleus. The protein localises to the chromosome. The enzyme catalyses ATP + H2O = ADP + phosphate + H(+). With respect to regulation, adopts an inactive conformation in absence of DNA damage. Binding to poly-ADP-ribosylated histones activates the ATP-dependent chromatin remodeler activity. In terms of biological role, ATP-dependent chromatin remodeler that mediates chromatin-remodeling following DNA damage. Recruited to DNA damage sites through interaction with poly-ADP-ribose: specifically recognizes and binds histones that are poly-ADP-ribosylated on serine residues in response to DNA damage. Poly-ADP-ribose-binding activates the ATP-dependent chromatin remodeler activity, thereby regulating chromatin during DNA repair. Catalyzes nucleosome sliding away from DNA breaks in an ATP-dependent manner. Chromatin remodeling activity promotes PARP2 removal from chromatin. The protein is Chromodomain-helicase-DNA-binding protein 1-like (Chd1l) of Mus musculus (Mouse).